The chain runs to 503 residues: Ell-associated factor Eaf (503 aa).

2 stretches are compositionally biased toward polar residues: residues 143-158 (PGQQISNGSGPSTNVA) and 170-189 (ENSTMRITSKTKVSTGSRRN). Disordered regions lie at residues 143–223 (PGQQ…PAWD) and 251–503 (NGSQ…EDDD). Phosphoserine is present on S199. Positions 251 to 264 (NGSQANTSGSSTGS) are enriched in polar residues. A compositionally biased stretch (basic residues) spans 281–296 (GKQRQAPHHGHAKRQQ). The span at 297 to 311 (RSSPPMVQQQPNFGR) shows a compositional bias: polar residues. A compositionally biased stretch (low complexity) spans 312 to 326 (NSYNGGNNYAQQQQH). Acidic residues predominate over residues 382–397 (DSSDSDSGSDSDDSTE). Low complexity-rich tracts occupy residues 415–435 (MHHQQQQQQQHHLQQQQQQQH) and 484–497 (NDLLQNDLQLSSNS).

The protein belongs to the EAF family.

Its subcellular location is the nucleus. Functionally, promotes transcriptional elongation by Su(Tpl)/ELL. Essential for development. The chain is Ell-associated factor Eaf from Drosophila ananassae (Fruit fly).